A 448-amino-acid polypeptide reads, in one-letter code: MEQKFKTDSMNEDRISDLPDALLLQILSSLPTENAIATSVLSKRWRSLWTMLPKLKFDSNFNPVFDDDNIDPTMFSENVYKTLSLHKAPVLESLHLSFEGRTDCLHVGIWIATAFARGVRKLVLDSFYQEDQTVTLPSVLFSYNDSLEILKLKCAIDLDFPSRVCLKSLRKLYLDQVHFKDEESVCNLLCGCPSLQDLVVHRYSNADVATFTIASPSLQRLTIEDLRQEGGYGNGSYVINAPGLKYLNINGVIDIESCLIDKALELEEAKISNVSGITNENILESLTSAKRLILHLSPLEVKVPTGKIFDQLGCLELLTHEREWWNLLSIMLDSSPKLQILKLTDVYLHDNKTNPDERKWNPPKCAPECLLFHLETFLWIGYEWQRGDEKEVATYILENARRLKKATFSTKRIGREKLEDFEKRREMLNELAIVLWDSNSCHLVFEST.

The region spanning 12–64 (EDRISDLPDALLLQILSSLPTENAIATSVLSKRWRSLWTMLPKLKFDSNFNPV) is the F-box domain. LRR repeat units lie at residues 72–98 (PTMF…HLSF), 149–176 (ILKL…YLDQ), 177–202 (VHFK…VVHR), 204–225 (SNAD…TIED), 226–251 (LRQE…NING), 271–296 (ISNV…ILHL), and 319–345 (THER…KLTD). Residues 359 to 410 (KWNPPKCAPECLLFHLETFLWIGYEWQRGDEKEVATYILENARRLKKATFST) form the FBD domain.

This chain is F-box/FBD/LRR-repeat protein At2g04230, found in Arabidopsis thaliana (Mouse-ear cress).